A 397-amino-acid polypeptide reads, in one-letter code: MQKQNIVILGSTGSIGKSTLSVIENNPQKYHAFALVGGKNVEAMFEQCIKFRPHFAALDDVNAAKILREKLIAHHIPTKVLAGRRAICELAAHPDADQIMASIVGAAGLLPTLSAVKAGKRVLLANKESLVTCGQLFIDAVKNYGSKLLPVDSEHNAIFQSLPPEAQEKIGFCPLSELGVSKIILTGSGGPFRYTPLEQFTNITPEQAVAHPNWSMGKKISVDSATMMNKGLEYIEARWLFNASAEEMEVIIHPQSIIHSMVRYVDGSVIAQMGNPDMRTPIAETMAYPHRTFAGVEPLDFFKIKELTFIEPDFNRYPNLKLAIDAFAAGQYATTAMNAANEIAVQAFLDRQISFMDIAKINSKTIERISPYTIQNIDDVLEIDAQAREIAKTLIRE.

NADPH contacts are provided by threonine 12, glycine 13, serine 14, isoleucine 15, glycine 38, lysine 39, asparagine 40, and asparagine 126. A 1-deoxy-D-xylulose 5-phosphate-binding site is contributed by lysine 127. Glutamate 128 is an NADPH binding site. Aspartate 152 is a Mn(2+) binding site. Serine 153, glutamate 154, serine 188, and histidine 211 together coordinate 1-deoxy-D-xylulose 5-phosphate. Glutamate 154 contributes to the Mn(2+) binding site. Residue glycine 217 participates in NADPH binding. Serine 224, asparagine 229, lysine 230, and glutamate 233 together coordinate 1-deoxy-D-xylulose 5-phosphate. Position 233 (glutamate 233) interacts with Mn(2+).

The protein belongs to the DXR family. The cofactor is Mg(2+). Mn(2+) is required as a cofactor.

It catalyses the reaction 2-C-methyl-D-erythritol 4-phosphate + NADP(+) = 1-deoxy-D-xylulose 5-phosphate + NADPH + H(+). The protein operates within isoprenoid biosynthesis; isopentenyl diphosphate biosynthesis via DXP pathway; isopentenyl diphosphate from 1-deoxy-D-xylulose 5-phosphate: step 1/6. Its function is as follows. Catalyzes the NADPH-dependent rearrangement and reduction of 1-deoxy-D-xylulose-5-phosphate (DXP) to 2-C-methyl-D-erythritol 4-phosphate (MEP). The protein is 1-deoxy-D-xylulose 5-phosphate reductoisomerase of Haemophilus influenzae (strain 86-028NP).